The following is a 314-amino-acid chain: Beta-ketoacyl-[acyl-carrier-protein] synthase III (314 aa).

Active-site residues include C112 and H241. Residues 242–246 (QANIR) are ACP-binding. N271 is an active-site residue.

Belongs to the thiolase-like superfamily. FabH family. In terms of assembly, homodimer.

It localises to the cytoplasm. It catalyses the reaction malonyl-[ACP] + acetyl-CoA + H(+) = 3-oxobutanoyl-[ACP] + CO2 + CoA. The protein operates within lipid metabolism; fatty acid biosynthesis. In terms of biological role, catalyzes the condensation reaction of fatty acid synthesis by the addition to an acyl acceptor of two carbons from malonyl-ACP. Catalyzes the first condensation reaction which initiates fatty acid synthesis and may therefore play a role in governing the total rate of fatty acid production. Possesses both acetoacetyl-ACP synthase and acetyl transacylase activities. Its substrate specificity determines the biosynthesis of branched-chain and/or straight-chain of fatty acids. In Vesicomyosocius okutanii subsp. Calyptogena okutanii (strain HA), this protein is Beta-ketoacyl-[acyl-carrier-protein] synthase III.